Reading from the N-terminus, the 588-residue chain is Complement component C8 beta chain (588 aa).

The N-terminal stretch at 1 to 30 is a signal peptide; sequence MFRVAIPRSALNLHSCLLHVTLSLVLISKA. The propeptide occupies 31-46; it reads AITTAGNEDSDVREAR. The TSP type-1 1 domain occupies 58–113; that stretch reads DCVISDWSAWSRCDTCQKKRYRYAKLDQPSQFGGEPCHFHDMEDEACDVPDRYTCD. 7 cysteine pairs are disulfide-bonded: Cys-59-Cys-94, Cys-70-Cys-104, Cys-73-Cys-112, Cys-118-Cys-129, Cys-123-Cys-142, Cys-136-Cys-151, and Cys-158-Cys-196. C-linked (Man) tryptophan glycans are attached at residues Trp-64 and Trp-67. One can recognise an LDL-receptor class A domain in the interval 115-152; sequence IPLCEGFLCTQTGRCIHRTLQCNGEDDCGDMSDEVGCK. 6 residues coordinate Ca(2+): Leu-134, Asn-137, Glu-139, Asp-141, Asp-147, and Glu-148. Positions 154 to 500 constitute an MACPF domain; it reads VPKPCRQEAE…EYLAESSSCR (347 aa). The next 4 membrane-spanning stretches (beta stranded) occupy residues 248 to 255, 258 to 265, 375 to 382, and 388 to 395; these read TIVSIGFA, GIAEFGFN, TQAGLKIG, and VYVSAGIE. Intrachain disulfides connect Cys-374–Cys-399, Cys-499–Cys-547, Cys-501–Cys-517, Cys-504–Cys-519, and Cys-521–Cys-530. Residues 501 to 531 form the EGF-like domain; it reads CAPCHNNGVAVLRGTRCDCVCPTGYTGRGCE. Residues 542–588 enclose the TSP type-1 2 domain; sequence DGSWSCWGAWSSCSGRKMSRSRQCNNPVPSDGGLACRGLQQESTDCF. Residues Trp-548 and Trp-551 are each glycosylated (C-linked (Man) tryptophan). Cysteines 554 and 587 form a disulfide.

It belongs to the complement C6/C7/C8/C9 family. Heterotrimer of 3 chains: alpha (C8A), beta (C8B) and gamma (C8G); the alpha and gamma chains are disulfide bonded. Component of the membrane attack complex (MAC), composed of complement C5b, C6, C7, C8A, C8B, C8G and multiple copies of the pore-forming subunit C9.

Its subcellular location is the secreted. It is found in the target cell membrane. In terms of biological role, component of the membrane attack complex (MAC), a multiprotein complex activated by the complement cascade, which inserts into a target cell membrane and forms a pore, leading to target cell membrane rupture and cell lysis. The MAC is initiated by proteolytic cleavage of C5 into complement C5b in response to the classical, alternative, lectin and GZMK complement pathways. The complement pathways consist in a cascade of proteins that leads to phagocytosis and breakdown of pathogens and signaling that strengthens the adaptive immune system. C8B, together with C8A and C8G, inserts into the target membrane, but does not form pores by itself. During MAC assembly, associates with C5b, C6 and C7 to form the C5b8 intermediate complex that inserts into the target membrane and traverses the bilayer increasing membrane rigidity. The polypeptide is Complement component C8 beta chain (c8b) (Paralichthys olivaceus (Bastard halibut)).